The following is a 729-amino-acid chain: Neurochondrin (729 aa).

Serine 2 bears the N-acetylserine mark. Serine 2 is modified (phosphoserine). The residue at position 2 (serine 2) is an N-acetylalanine. Residues cysteine 3 and cysteine 4 are each lipidated (S-palmitoyl cysteine). Arginine 75 bears the Asymmetric dimethylarginine mark. Serine 448 bears the Phosphoserine mark.

It belongs to the neurochondrin family. In terms of assembly, interacts with MCHR1. Interacts with SEMA4C. Interacts with DIAPH1 (via FH3 domain). Interacts with GRM5. In terms of processing, palmitoylated. Palmitoylation by ZDHHC1, ZDHHC3 and ZDHHC11 regulates the association of NCDN with endosome membranes. May also be palmitoylated by ZDHHC7. As to expression, abundantly expressed in whole adult brain and in all individual brain regions examined, including spinal cord. Weakly expressed in ovary, testis, fetal brain and small intestine.

The protein localises to the cytoplasm. It localises to the cytosol. It is found in the endosome membrane. The protein resides in the cell projection. Its subcellular location is the dendrite. The protein localises to the postsynapse. Its function is as follows. Probably involved in signal transduction in the nervous system, via increasing cell surface localization of GRM5/mGluR5 and positively regulating its signaling. Required for the spatial learning process. Acts as a negative regulator of Ca(2+)-calmodulin-dependent protein kinase 2 (CaMK2) phosphorylation. May play a role in modulating melanin-concentrating hormone-mediated functions via its interaction with MCHR1 that interferes with G protein-coupled signal transduction. May be involved in bone metabolism. May also be involved in neurite outgrowth. The sequence is that of Neurochondrin from Homo sapiens (Human).